We begin with the raw amino-acid sequence, 264 residues long: E3 ubiquitin-protein ligase MARCHF8 (264 aa).

Residues 15–47 are disordered; it reads LGHSVSRSSNISKAGSPTSVSAPSRFPRTSVTP. A compositionally biased stretch (polar residues) spans 16–47; sequence GHSVSRSSNISKAGSPTSVSAPSRFPRTSVTP. An RING-CH-type zinc finger spans residues 45-106; sequence VTPSSQDICR…ELCKFEFIME (62 aa). Residues Cys53, Cys56, Cys70, Cys72, His80, Cys83, Cys96, and Cys99 each coordinate Zn(2+). The next 2 membrane-spanning stretches (helical) occupy residues 130–150 and 170–190; these read CSVTFHVIAITCVVWSLYVLI and FWTKLVVVAIGFTGGLLFMYV.

It localises to the cytoplasmic vesicle membrane. Its subcellular location is the lysosome membrane. It is found in the early endosome membrane. The enzyme catalyses S-ubiquitinyl-[E2 ubiquitin-conjugating enzyme]-L-cysteine + [acceptor protein]-L-lysine = [E2 ubiquitin-conjugating enzyme]-L-cysteine + N(6)-ubiquitinyl-[acceptor protein]-L-lysine.. It participates in protein modification; protein ubiquitination. Its function is as follows. E3 ubiquitin-protein ligase that mediates ubiquitination of cd86 and MHC class II proteins, such as hla-dr alpha and beta, and promotes their subsequent endocytosis and sorting to lysosomes via multivesicular bodies. This is E3 ubiquitin-protein ligase MARCHF8 (marchf8) from Xenopus laevis (African clawed frog).